We begin with the raw amino-acid sequence, 518 residues long: Bifunctional enzyme NanE/NanK (518 aa).

The tract at residues methionine 1 to serine 234 is manNAc-6-P epimerase. The tract at residues serine 235–serine 518 is manNAc kinase. Residues alanine 239 to lysine 246 and glycine 365 to leucine 372 contribute to the ATP site.

It in the N-terminal section; belongs to the NanE family. This sequence in the C-terminal section; belongs to the ROK (NagC/XylR) family. NanK subfamily.

It carries out the reaction an N-acyl-D-glucosamine 6-phosphate = an N-acyl-D-mannosamine 6-phosphate. The enzyme catalyses an N-acyl-D-mannosamine + ATP = an N-acyl-D-mannosamine 6-phosphate + ADP + H(+). It participates in amino-sugar metabolism; N-acetylneuraminate degradation; D-fructose 6-phosphate from N-acetylneuraminate: step 2/5. It functions in the pathway amino-sugar metabolism; N-acetylneuraminate degradation; D-fructose 6-phosphate from N-acetylneuraminate: step 3/5. Its function is as follows. Converts N-acetylmannosamine-6-phosphate (ManNAc-6-P) to N-acetylglucosamine-6-phosphate (GlcNAc-6-P). Catalyzes the phosphorylation of N-acetylmannosamine (ManNAc) to ManNAc-6-P. The sequence is that of Bifunctional enzyme NanE/NanK (nanEK) from Brucella melitensis biotype 1 (strain ATCC 23456 / CCUG 17765 / NCTC 10094 / 16M).